A 443-amino-acid polypeptide reads, in one-letter code: D-serine dehydratase (443 aa).

K118 bears the N6-(pyridoxal phosphate)lysine mark.

Belongs to the serine/threonine dehydratase family. DsdA subfamily. Monomer. Pyridoxal 5'-phosphate is required as a cofactor.

It catalyses the reaction D-serine = pyruvate + NH4(+). The polypeptide is D-serine dehydratase (Escherichia coli O17:K52:H18 (strain UMN026 / ExPEC)).